The sequence spans 313 residues: MASIQLARTTRGGDGVARADGTRQADEAGSGTLYLVPTPIGNPGDITLRAIEVLRRVGVVASEDTRHTYRLFQSLEIDARLVSYHDHNEESRSRQLLGLLREGTDVALVSDAGTPLVNDPGYRLVAAAVEADVPVRPLPGATASVTALIGSGMPNHQFHYVGFLPRKEAARRAALTALRSTPATLIFFEAPHRIVAMLADLAAVLGDRPAALARNLTKDDEEFLRGRLNELTARLRVEQVVRGQFTVVVAGSPEAHADEDRALAARLTETLVRHGAEARLIREVVREVTGLPRNWVYEQVRLATERSGPLGNS.

The disordered stretch occupies residues 1–23 (MASIQLARTTRGGDGVARADGTR).

It belongs to the methyltransferase superfamily. RsmI family.

It is found in the cytoplasm. The catalysed reaction is cytidine(1402) in 16S rRNA + S-adenosyl-L-methionine = 2'-O-methylcytidine(1402) in 16S rRNA + S-adenosyl-L-homocysteine + H(+). Functionally, catalyzes the 2'-O-methylation of the ribose of cytidine 1402 (C1402) in 16S rRNA. The chain is Ribosomal RNA small subunit methyltransferase I from Micromonospora olivasterospora.